Here is a 421-residue protein sequence, read N- to C-terminus: EQQRYLNAKKYVKLVLVADYIMYLKYGRSLTTLRTRMYDIVNIINLIFQRMNIHVALVGLEIWSNRDKIIVQSSADVTLDLFAKWRETDLLKRKSHDNAQLLTGINFNGPTAGLAYLSGICKPMYSAGIVQDHNKVHHLVAIAMAHEMGHNLGMDHDKDTCTCGARSCVMAGTLSCEPSYLFSDCSRREHRAFLIKDMPQCILEKPLRTDVVSPPVCGNYFVEVGEECDCGFSATCRDTCCDAATCKLRQGAQCAEGLCCDQCRFKGAGTECRAAKDECDMADLCTGRSAECTDRFQRNGQPCQNNNGYCYNGTCPIMRDQCIALFGPNAAVSQDACFQFNLQGNHYGYCRKEQNTKIACEPQDVKCGRLYCFPSSPATKNPCNIHYSPNDEDKGMVLPGTKCADGKACSNGRCVDVNTPY.

In terms of domain architecture, Peptidase M12B spans 10–206 (KYVKLVLVAD…DMPQCILEKP (197 aa)). Cystine bridges form between C121/C201, C161/C185, and C163/C168. H146 lines the Zn(2+) pocket. Residue E147 is part of the active site. H150 and H156 together coordinate Zn(2+). The region spanning 214 to 299 (PPVCGNYFVE…AECTDRFQRN (86 aa)) is the Disintegrin domain. 6 residues coordinate Ca(2+): V216, N219, F221, E223, E226, and D229. 14 disulfide bridges follow: C217–C246, C228–C241, C230–C236, C240–C263, C254–C260, C259–C285, C272–C292, C279–C310, C303–C315, C322–C372, C337–C383, C350–C360, C367–C409, and C403–C414. Residues 278–280 (ECD) carry the D/ECD-tripeptide motif. Positions 280, 281, 283, 294, and 295 each coordinate Ca(2+). Residue N312 is glycosylated (N-linked (GlcNAc...) asparagine).

The protein belongs to the venom metalloproteinase (M12B) family. P-III subfamily. P-IIIc sub-subfamily. In terms of assembly, homodimer; disulfide-linked. Zn(2+) is required as a cofactor. In terms of tissue distribution, expressed by the venom gland.

It localises to the secreted. Snake venom zinc metalloprotease that induces apoptosis in vascular endothelial cells (VEC), without degrading the extracellular matrix (it cannot cleave collagen) or inhibiting adhesion of VEC. Has also fibrinogenolytic and hemorrhagic activities. The protein is Zinc metalloproteinase-disintegrin-like lachestatin-1 of Lachesis muta rhombeata (Bushmaster).